The following is a 649-amino-acid chain: tRNA-guanine(15) transglycosylase (649 aa).

Asp88 serves as the catalytic Nucleophile. Substrate is bound by residues Asp123 and Ala194. Residues Cys280, Cys282, and Cys285 each contribute to the Zn(2+) site. The 76-residue stretch at Lys573–Lys648 folds into the PUA domain.

The protein belongs to the archaeosine tRNA-ribosyltransferase family. Zn(2+) serves as cofactor.

The catalysed reaction is guanosine(15) in tRNA + 7-cyano-7-deazaguanine = 7-cyano-7-carbaguanosine(15) in tRNA + guanine. Its pathway is tRNA modification; archaeosine-tRNA biosynthesis. Functionally, exchanges the guanine residue with 7-cyano-7-deazaguanine (preQ0) at position 15 in the dihydrouridine loop (D-loop) of archaeal tRNAs. The protein is tRNA-guanine(15) transglycosylase of Methanococcus maripaludis (strain C7 / ATCC BAA-1331).